Consider the following 303-residue polypeptide: 5-dehydro-4-deoxyglucarate dehydratase (303 aa).

It belongs to the DapA family.

The catalysed reaction is 5-dehydro-4-deoxy-D-glucarate + H(+) = 2,5-dioxopentanoate + CO2 + H2O. It functions in the pathway carbohydrate acid metabolism; D-glucarate degradation; 2,5-dioxopentanoate from D-glucarate: step 2/2. The chain is 5-dehydro-4-deoxyglucarate dehydratase from Pseudomonas putida (Arthrobacter siderocapsulatus).